The primary structure comprises 131 residues: Large ribosomal subunit protein bL19 (131 aa).

This sequence belongs to the bacterial ribosomal protein bL19 family.

This protein is located at the 30S-50S ribosomal subunit interface and may play a role in the structure and function of the aminoacyl-tRNA binding site. The protein is Large ribosomal subunit protein bL19 of Caulobacter sp. (strain K31).